A 355-amino-acid polypeptide reads, in one-letter code: 4-dimethylallyltryptophan N-methyltransferase easF (355 aa).

Belongs to the methyltransferase superfamily. In terms of assembly, homodimer.

The catalysed reaction is 4-(3-methylbut-2-enyl)-L-tryptophan + S-adenosyl-L-methionine = 4-(3-methylbut-2-enyl)-L-abrine + S-adenosyl-L-homocysteine + H(+). Its pathway is alkaloid biosynthesis; ergot alkaloid biosynthesis. In terms of biological role, 4-dimethylallyltryptophan N-methyltransferase; part of the gene cluster that mediates the biosynthesis of fungal ergot alkaloid. DmaW catalyzes the first step of ergot alkaloid biosynthesis by condensing dimethylallyl diphosphate (DMAP) and tryptophan to form 4-dimethylallyl-L-tryptophan. The second step is catalyzed by the methyltransferase easF that methylates 4-dimethylallyl-L-tryptophan in the presence of S-adenosyl-L-methionine, resulting in the formation of 4-dimethylallyl-L-abrine. The catalase easC and the FAD-dependent oxidoreductase easE then transform 4-dimethylallyl-L-abrine to chanoclavine-I which is further oxidized by easD in the presence of NAD(+), resulting in the formation of chanoclavine-I aldehyde. Agroclavine dehydrogenase easG then mediates the conversion of chanoclavine-I aldehyde to agroclavine via a non-enzymatic adduct reaction: the substrate is an iminium intermediate that is formed spontaneously from chanoclavine-I aldehyde in the presence of glutathione. Further conversion of agroclavine to paspalic acid is a two-step process involving oxidation of agroclavine to elymoclavine and of elymoclavine to paspalic acid, the second step being performed by the elymoclavine oxidase cloA. However, cloA does not encode a functional enzyme indicating that C.fusiformis terminates its ergot alkaloid pathway at elymoclavine. The chain is 4-dimethylallyltryptophan N-methyltransferase easF from Claviceps fusiformis (Ergot fungus).